Here is a 327-residue protein sequence, read N- to C-terminus: Glutaminase 1 (327 aa).

Residues serine 74, asparagine 126, glutamate 170, asparagine 177, tyrosine 201, tyrosine 253, and valine 271 each contribute to the substrate site.

This sequence belongs to the glutaminase family. As to quaternary structure, homotetramer.

The enzyme catalyses L-glutamine + H2O = L-glutamate + NH4(+). The polypeptide is Glutaminase 1 (glsA1) (Bacillus subtilis (strain 168)).